We begin with the raw amino-acid sequence, 1371 residues long: Pleckstrin homology-like domain family B member 1 (1371 aa).

The residue at position 51 (Ser-51) is a Phosphoserine. The region spanning 64 to 125 is the FHA domain; the sequence is TVIGSAARDI…LTQGCMLCLG (62 aa). An Asymmetric dimethylarginine modification is found at Arg-131. The disordered stretch occupies residues 153–182; the sequence is GPTYNPGSAESESLVNGNHTAQPATRAPSA. The span at 157-175 shows a compositional bias: polar residues; that stretch reads NPGSAESESLVNGNHTAQP. 3 positions are modified to phosphoserine: Ser-192, Ser-220, and Ser-223. Disordered stretches follow at residues 211-336 and 368-573; these read AAGK…TDSP and PSSG…RVPI. Composition is skewed to low complexity over residues 252 to 273 and 296 to 312; these read SPAF…HSPS and LQPP…SDSP. 2 positions are modified to phosphoserine: Ser-325 and Ser-335. Residues 368–377 show a composition bias toward polar residues; the sequence is PSSGARSQPA. A phosphoserine mark is found at Ser-382, Ser-405, Ser-431, Ser-445, Ser-463, Ser-472, Ser-491, and Ser-503. Residues 464 to 477 are compositionally biased toward low complexity; sequence PSLSRRALSPLPAR. Over residues 483–493 the composition is skewed to basic and acidic residues; it reads KLSREVAESPR. Arg-514 carries the post-translational modification Omega-N-methylarginine. 2 positions are modified to phosphoserine: Ser-520 and Ser-522. Thr-524 carries the phosphothreonine modification. Ser-535, Ser-541, Ser-553, Ser-557, Ser-565, Ser-580, Ser-585, and Ser-683 each carry phosphoserine. Polar residues predominate over residues 547-559; that stretch reads GSLTGASPRQSPR. Disordered regions lie at residues 672–714 and 942–1020; these read ESGG…GAKH and GLAA…QNGT. Basic and acidic residues-rich tracts occupy residues 682-696 and 703-714; these read ESME…KEEC and QQEHEDAPGAKH. Residues 688–798 adopt a coiled-coil conformation; it reads DEENLKEECS…ETGIQKDRDK (111 aa). 2 positions are modified to phosphoserine: Ser-976 and Ser-1022. Low complexity predominate over residues 976–997; sequence SPLPRTRSGPLPSSSGSSSSSS. The segment at 1124 to 1143 is disordered; sequence SMETSISTGGNSACSPDNMS. Residues 1150–1216 are a coiled coil; sequence MGKIEEMEKM…QQLVEKEVKL (67 aa). Positions 1261–1364 constitute a PH domain; the sequence is SKVCRGYLIK…WMDVIVTGAE (104 aa).

The protein is Pleckstrin homology-like domain family B member 1 (Phldb1) of Mus musculus (Mouse).